The sequence spans 441 residues: Chromosome partition protein MukF (441 aa).

Residues 208-236 form a leucine-zipper region; the sequence is LTETSSTLRELQDTLEAAGDKLQTSLLSI.

Belongs to the MukF family. Interacts, and probably forms a ternary complex, with MukE and MukB via its C-terminal region. The complex formation is stimulated by calcium or magnesium. It is required for an interaction between MukE and MukB.

It localises to the cytoplasm. The protein localises to the nucleoid. In terms of biological role, involved in chromosome condensation, segregation and cell cycle progression. May participate in facilitating chromosome segregation by condensation DNA from both sides of a centrally located replisome during cell division. Not required for mini-F plasmid partitioning. Probably acts via its interaction with MukB and MukE. Overexpression results in anucleate cells. It has a calcium binding activity. This is Chromosome partition protein MukF from Pectobacterium atrosepticum (strain SCRI 1043 / ATCC BAA-672) (Erwinia carotovora subsp. atroseptica).